Reading from the N-terminus, the 223-residue chain is tRNA (guanine-N(7)-)-methyltransferase (223 aa).

S-adenosyl-L-methionine is bound by residues Glu45, Glu70, and Asp125. Asp125 is a catalytic residue. Residues Lys129, Asp161, and 201–204 (TEYE) contribute to the substrate site.

It belongs to the class I-like SAM-binding methyltransferase superfamily. TrmB family.

It catalyses the reaction guanosine(46) in tRNA + S-adenosyl-L-methionine = N(7)-methylguanosine(46) in tRNA + S-adenosyl-L-homocysteine. Its pathway is tRNA modification; N(7)-methylguanine-tRNA biosynthesis. Functionally, catalyzes the formation of N(7)-methylguanine at position 46 (m7G46) in tRNA. In Mesoplasma florum (strain ATCC 33453 / NBRC 100688 / NCTC 11704 / L1) (Acholeplasma florum), this protein is tRNA (guanine-N(7)-)-methyltransferase.